The sequence spans 83 residues: Exodeoxyribonuclease 7 small subunit (83 aa).

It belongs to the XseB family. In terms of assembly, heterooligomer composed of large and small subunits.

It is found in the cytoplasm. The catalysed reaction is Exonucleolytic cleavage in either 5'- to 3'- or 3'- to 5'-direction to yield nucleoside 5'-phosphates.. Bidirectionally degrades single-stranded DNA into large acid-insoluble oligonucleotides, which are then degraded further into small acid-soluble oligonucleotides. The chain is Exodeoxyribonuclease 7 small subunit from Aeromonas salmonicida (strain A449).